The sequence spans 113 residues: uncharacterized protein (113 aa).

Residues 1-14 (MATRNALRIVSRRF) constitute a mitochondrion transit peptide. Positions 41–79 (QKLARQGPGEQAAGSASEAKVAGATASASAESGPKVSED) are disordered. Over residues 55-73 (SASEAKVAGATASASAESG) the composition is skewed to low complexity.

It localises to the mitochondrion. This is an uncharacterized protein from Arabidopsis thaliana (Mouse-ear cress).